The following is a 120-amino-acid chain: uncharacterized protein (120 aa).

3 consecutive transmembrane segments (helical) span residues 20–39 (FFWP…CYLL), 52–71 (GSSL…LFSI), and 86–108 (ILVV…SIIG).

Its subcellular location is the cell membrane. This is an uncharacterized protein from Pasteurella multocida (strain Pm70).